We begin with the raw amino-acid sequence, 359 residues long: WAT1-related protein At4g28040 (359 aa).

10 helical membrane passes run 10–30 (LALV…KAAF), 37–57 (TVFV…ISFI), 66–86 (PSLG…GVTV), 103–123 (ACAM…IVGF), 133–153 (SVAK…MTFL), 170–190 (WLLG…WLIL), 204–224 (TSAC…LALG), 240–260 (SCCI…AWIV), 266–286 (VFSA…GALY), and 292–312 (YLGS…VLWG). The EamA 1 domain occupies 18–131 (TSAGVALFTK…GFESIKRRSM (114 aa)). In terms of domain architecture, EamA 2 spans 199 to 310 (PDHLYTSACT…AIILGLYIVL (112 aa)).

It belongs to the drug/metabolite transporter (DMT) superfamily. Plant drug/metabolite exporter (P-DME) (TC 2.A.7.4) family.

It is found in the membrane. This Arabidopsis thaliana (Mouse-ear cress) protein is WAT1-related protein At4g28040.